We begin with the raw amino-acid sequence, 565 residues long: Dihydroxy-acid dehydratase (565 aa).

Aspartate 80 serves as a coordination point for Mg(2+). A [2Fe-2S] cluster-binding site is contributed by cysteine 121. The Mg(2+) site is built by aspartate 122 and lysine 123. Lysine 123 carries the post-translational modification N6-carboxylysine. Cysteine 194 is a [2Fe-2S] cluster binding site. Glutamate 447 lines the Mg(2+) pocket. Serine 473 functions as the Proton acceptor in the catalytic mechanism.

It belongs to the IlvD/Edd family. As to quaternary structure, homodimer. [2Fe-2S] cluster is required as a cofactor. It depends on Mg(2+) as a cofactor.

The enzyme catalyses (2R)-2,3-dihydroxy-3-methylbutanoate = 3-methyl-2-oxobutanoate + H2O. It catalyses the reaction (2R,3R)-2,3-dihydroxy-3-methylpentanoate = (S)-3-methyl-2-oxopentanoate + H2O. It functions in the pathway amino-acid biosynthesis; L-isoleucine biosynthesis; L-isoleucine from 2-oxobutanoate: step 3/4. Its pathway is amino-acid biosynthesis; L-valine biosynthesis; L-valine from pyruvate: step 3/4. Functions in the biosynthesis of branched-chain amino acids. Catalyzes the dehydration of (2R,3R)-2,3-dihydroxy-3-methylpentanoate (2,3-dihydroxy-3-methylvalerate) into 2-oxo-3-methylpentanoate (2-oxo-3-methylvalerate) and of (2R)-2,3-dihydroxy-3-methylbutanoate (2,3-dihydroxyisovalerate) into 2-oxo-3-methylbutanoate (2-oxoisovalerate), the penultimate precursor to L-isoleucine and L-valine, respectively. The polypeptide is Dihydroxy-acid dehydratase (Chlorobium luteolum (strain DSM 273 / BCRC 81028 / 2530) (Pelodictyon luteolum)).